A 418-amino-acid chain; its full sequence is 26S proteasome regulatory subunit 6B (418 aa).

Met-1 carries the post-translational modification N-acetylmethionine. Residue Ser-21 is modified to Phosphoserine. Thr-25 carries the phosphothreonine modification. The residue at position 28 (Ser-28) is a Phosphoserine. 206–213 (GPPGCGKT) provides a ligand contact to ATP. 2 positions are modified to N6-acetyllysine: Lys-397 and Lys-401.

The protein belongs to the AAA ATPase family. Component of the 19S proteasome regulatory particle complex. The 26S proteasome consists of a 20S core particle (CP) and two 19S regulatory subunits (RP). The regulatory particle is made of a lid composed of 9 subunits, a base containing 6 ATPases including PSMC4 and few additional components. Interacts with NR1I3. Interacts with PAAF1. Interacts with TRIM5. Interacts with ZFAND1.

The protein resides in the cytoplasm. The protein localises to the nucleus. In terms of biological role, component of the 26S proteasome, a multiprotein complex involved in the ATP-dependent degradation of ubiquitinated proteins. This complex plays a key role in the maintenance of protein homeostasis by removing misfolded or damaged proteins, which could impair cellular functions, and by removing proteins whose functions are no longer required. Therefore, the proteasome participates in numerous cellular processes, including cell cycle progression, apoptosis, or DNA damage repair. PSMC4 belongs to the heterohexameric ring of AAA (ATPases associated with diverse cellular activities) proteins that unfolds ubiquitinated target proteins that are concurrently translocated into a proteolytic chamber and degraded into peptides. In Mus musculus (Mouse), this protein is 26S proteasome regulatory subunit 6B (Psmc4).